The chain runs to 494 residues: GlcNAc-binding protein A (494 aa).

The first 21 residues, 1–21, serve as a signal peptide directing secretion; it reads MKLNKIMLAMVVMSISGTAMA. One can recognise a Chitin-binding type-4 domain in the interval 22–192; it reads HGYIENPPSR…TFYNMIDAEF (171 aa). Residues 435–484 form the Chitin-binding type-3 domain; it reads APAWSNKSSYQAKDTVTHNGRIYMSKWWADKASVPGDAAVTDTTGNGSGW. Residues 474–494 are disordered; sequence VTDTTGNGSGWGKVWEDKGAC.

The protein belongs to the GbpA family.

Its subcellular location is the secreted. In terms of biological role, probably interacts with GlcNAc residues. May promote attachment to both epithelial cell surfaces and chitin. In Yersinia enterocolitica serotype O:8 / biotype 1B (strain NCTC 13174 / 8081), this protein is GlcNAc-binding protein A.